A 526-amino-acid polypeptide reads, in one-letter code: Thymocyte selection-associated high mobility group box protein TOX (526 aa).

Polar residues predominate over residues 194–203; that stretch reads NMGGTNVAHN. The disordered stretch occupies residues 194–264; the sequence is NMGGTNVAHN…KKDPNEPQKP (71 aa). A compositionally biased stretch (low complexity) spans 209–220; the sequence is GSKSATPSPSSS. Over residues 228-245 the composition is skewed to basic and acidic residues; it reads DASKINGGEKRPASDMGK. Positions 237-256 match the Nuclear localization signal motif; it reads KRPASDMGKKPKTPKKKKKK. The span at 246-256 shows a compositional bias: basic residues; the sequence is KPKTPKKKKKK. The segment at residues 261–329 is a DNA-binding region (HMG box); it reads PQKPVSAYAL…EYLKQLAAYR (69 aa).

This sequence belongs to the high motility group (HMG) box superfamily. Interacts with HBO1 complex composed at least of KAT7/HBO1, ING4, MEAF6, and JADE2; this complex is involved in histone acetylation. Interacts with DNMT1, LEO1, PAF1, SAP130 and SIN3A; these interactors regulate chromatin remodeling. Interacts with an array of proteins involved in RNA processing and translation and DNA replication. As to expression, expressed in neurons of the subventricular zone (at protein level). Expressed in distinct subpopulations of thymocytes undergoing positive selection: double CD4-positive CD8-positive (DP) cells, CD4-positive CD8-low transitional cells and in single CD4-positive and CD8-positive cells (at protein level). Expressed in ILC progenitors and mature ILC subsets: ILC1, ILC2 and ILC3 (at protein level). Expressed in lymphoid tissue-inducer cells and bone marrow NK cell subsets. Abundant in thymus, liver and brain. Also detected in small intestine, spleen, stomach and testis. Highly expressed in tumor-infiltrating CD8-positive T cells (at protein level).

The protein localises to the nucleus. Functionally, transcriptional regulator with a major role in neural stem cell commitment and corticogenesis as well as in lymphoid cell development and lymphoid tissue organogenesis. Binds to GC-rich DNA sequences in the proximity of transcription start sites and may alter chromatin structure, modifying access of transcription factors to DNA. During cortical development, controls the neural stem cell pool by inhibiting the switch from proliferative to differentiating progenitors. Beyond progenitor cells, promotes neurite outgrowth in newborn neurons migrating to reach the cortical plate. May activate or repress critical genes for neural stem cell fate such as SOX2, EOMES and ROBO2. Plays an essential role in the development of lymphoid tissue-inducer (LTi) cells, a subset necessary for the formation of secondary lymphoid organs: peripheral lymph nodes and Peyer's patches. Acts as a developmental checkpoint and regulates thymocyte positive selection toward T cell lineage commitment. Required for the development of various T cell subsets, including CD4-positive helper T cells, CD8-positive cytotoxic T cells, regulatory T cells and CD1D-dependent natural killer T (NKT) cells. Required for the differentiation of common lymphoid progenitors (CMP) to innate lymphoid cells (ILC). May regulate the NOTCH-mediated gene program, promoting differentiation of the ILC lineage. Required at the progenitor phase of NK cell development in the bone marrow to specify NK cell lineage commitment. Upon chronic antigen stimulation, diverts T cell development by promoting the generation of exhaustive T cells, while suppressing effector and memory T cell programming. May regulate the expression of genes encoding inhibitory receptors such as PDCD1 and induce the exhaustion program, to prevent the overstimulation of T cells and activation-induced cell death. The chain is Thymocyte selection-associated high mobility group box protein TOX from Mus musculus (Mouse).